The primary structure comprises 833 residues: Leucine--tRNA ligase (833 aa).

Positions 41–52 (PYPSGAGLHVGH) match the 'HIGH' region motif. A 'KMSKS' region motif is present at residues 610 to 614 (KMSKS). Position 613 (K613) interacts with ATP.

Belongs to the class-I aminoacyl-tRNA synthetase family.

It is found in the cytoplasm. The enzyme catalyses tRNA(Leu) + L-leucine + ATP = L-leucyl-tRNA(Leu) + AMP + diphosphate. This Streptococcus equi subsp. zooepidemicus (strain MGCS10565) protein is Leucine--tRNA ligase.